The chain runs to 113 residues: UPF0145 protein MTH_544 (113 aa).

It belongs to the UPF0145 family.

The polypeptide is UPF0145 protein MTH_544 (Methanothermobacter thermautotrophicus (strain ATCC 29096 / DSM 1053 / JCM 10044 / NBRC 100330 / Delta H) (Methanobacterium thermoautotrophicum)).